A 497-amino-acid polypeptide reads, in one-letter code: tRNA (adenine(58)-N(1))-methyltransferase non-catalytic subunit TRM6 (497 aa).

The tract at residues 81 to 103 (LEEPASETKEAGTDNRNIVDDGK) is disordered. A substrate region spans residues 95 to 105 (NRNIVDDGKSQ). The residue at position 108 (Thr108) is a Phosphothreonine. Substrate stretches follow at residues 146 to 155 (KYIKKKKKKY) and 176 to 183 (REPGKINH). The interval 275 to 354 (MLSSEPKDST…EKQRRQEEQR (80 aa)) is disordered. Residues 289–307 (SNGELEEKEIAEQADEDNI) show a composition bias toward acidic residues. A compositionally biased stretch (basic and acidic residues) spans 328-354 (PENKEPKEKRSKRDYIQEKQRRQEEQR). Positions 349 and 377 each coordinate substrate. Substrate regions lie at residues 415 to 423 (RERGGVINL) and 434 to 441 (QVLPDRSH). Positions 474–497 (TGALDPHKAEEPAAKKQKCMESAS) are disordered. Residues 478 to 487 (DPHKAEEPAA) show a composition bias toward basic and acidic residues.

The protein belongs to the TRM6/GCD10 family. As to quaternary structure, heterotetramer; composed of two copies of TRMT6 and two copies of TRMT61A.

The protein localises to the nucleus. Functionally, substrate-binding subunit of tRNA (adenine-N(1)-)-methyltransferase, which catalyzes the formation of N(1)-methyladenine at position 58 (m1A58) in initiator methionyl-tRNA. Together with the TRMT61A catalytic subunit, part of a mRNA N(1)-methyltransferase complex that mediates methylation of adenosine residues at the N(1) position of a small subset of mRNAs: N(1) methylation takes place in tRNA T-loop-like structures of mRNAs and is only present at low stoichiometries. The protein is tRNA (adenine(58)-N(1))-methyltransferase non-catalytic subunit TRM6 (Trmt6) of Mus musculus (Mouse).